We begin with the raw amino-acid sequence, 157 residues long: 3-hydroxyacyl-[acyl-carrier-protein] dehydratase FabZ (157 aa).

The active site involves His-58.

Belongs to the thioester dehydratase family. FabZ subfamily.

It is found in the cytoplasm. The enzyme catalyses a (3R)-hydroxyacyl-[ACP] = a (2E)-enoyl-[ACP] + H2O. Functionally, involved in unsaturated fatty acids biosynthesis. Catalyzes the dehydration of short chain beta-hydroxyacyl-ACPs and long chain saturated and unsaturated beta-hydroxyacyl-ACPs. The polypeptide is 3-hydroxyacyl-[acyl-carrier-protein] dehydratase FabZ (Brucella melitensis biotype 2 (strain ATCC 23457)).